A 98-amino-acid polypeptide reads, in one-letter code: MPRPKKCRQLSSCVPCSLFKPNGIPAANLSQILLAADEFEALELGDVQRLSQLEAAAQMGISRQTFGYLLASARQKVATAITQGLVLKLPTPNDKDPI.

Belongs to the UPF0251 family.

This is UPF0251 protein SO_0727 from Shewanella oneidensis (strain ATCC 700550 / JCM 31522 / CIP 106686 / LMG 19005 / NCIMB 14063 / MR-1).